The sequence spans 119 residues: MKKTYRVKCEKDFQAIFKDGKSTANRKFVIYHLNRGQDHFRVGISVGKKIGNAVTRNAVKRKIRHVIMALGYQLKSEDFVVIARKGVESLEYQELQQNLHHVLKLAQLLEKGFESEEKH.

The protein belongs to the RnpA family. In terms of assembly, consists of a catalytic RNA component (M1 or rnpB) and a protein subunit.

The catalysed reaction is Endonucleolytic cleavage of RNA, removing 5'-extranucleotides from tRNA precursor.. Its function is as follows. RNaseP catalyzes the removal of the 5'-leader sequence from pre-tRNA to produce the mature 5'-terminus. It can also cleave other RNA substrates such as 4.5S RNA. The protein component plays an auxiliary but essential role in vivo by binding to the 5'-leader sequence and broadening the substrate specificity of the ribozyme. The chain is Ribonuclease P protein component from Streptococcus pyogenes serotype M12 (strain MGAS2096).